A 77-amino-acid polypeptide reads, in one-letter code: Small ribosomal subunit protein uS17 (77 aa).

The protein belongs to the universal ribosomal protein uS17 family. As to quaternary structure, part of the 30S ribosomal subunit.

One of the primary rRNA binding proteins, it binds specifically to the 5'-end of 16S ribosomal RNA. This Wolbachia sp. subsp. Brugia malayi (strain TRS) protein is Small ribosomal subunit protein uS17.